A 543-amino-acid chain; its full sequence is EH domain-containing protein 2 (543 aa).

S3 and S44 each carry phosphoserine. The 232-residue stretch at 55-286 (FDGKPMVLVA…DLFRDIQGLP (232 aa)) folds into the Dynamin-type G domain. The interval 65–72 (GQYSTGKT) is G1 motif. 65-72 (GQYSTGKT) lines the ATP pocket. The tract at residues 91–92 (EP) is G2 motif. A G3 motif region spans residues 153–156 (DTPG). The G4 motif stretch occupies residues 219–222 (NKAD). ATP is bound at residue K220. Residue V243 is a region of interest, G5 motif. Residue W258 participates in ATP binding. A mediates membrane-binding region spans residues 320-340 (TVFGKENKKKQLILKLPVIFA). Phosphoserine is present on residues S438, S468, S470, S484, and S493. The region spanning 449 to 537 (DKSKYDEIFY…RRLVPPSKRR (89 aa)) is the EH domain. Residues 481–516 (LPNSVLGRIWKLSDVDRDGMLDDEEFALASHLIEAK) enclose the EF-hand domain. Ca(2+) is bound by residues D494, D496, D498, M500, and E505. Residues 521 to 543 (GLPTNLPRRLVPPSKRRQKGSAE) are disordered. The span at 534-543 (SKRRQKGSAE) shows a compositional bias: basic residues.

The protein belongs to the TRAFAC class dynamin-like GTPase superfamily. Dynamin/Fzo/YdjA family. EHD subfamily. In terms of assembly, homodimer and homooligomer. Interacts with EHD1. May also interact with EHD3 and EHD4. Interacts with MYOF. Interacts with EHBP1. Interacts with FER1L5 (via second C2 domain). Interacts with CAV1 in a cholesterol-dependent manner. Interacts (via EH domain) with PACSIN2 (via NPF motifs); this interaction probably stabilizes the caveolae. As to expression, detected in lung and adipocytes. Detected at lower levels in heart and skeletal muscle.

The protein localises to the cell membrane. It localises to the membrane. It is found in the caveola. The protein resides in the endosome membrane. Its subcellular location is the cytoplasm. The protein localises to the cytosol. Its activity is regulated as follows. The very low intrinsic ATPase activity is increased upon interaction with liposomes. Functionally, ATP- and membrane-binding protein that controls membrane reorganization/tubulation upon ATP hydrolysis. Plays a role in membrane trafficking between the plasma membrane and endosomes. Important for the internalization of GLUT4. Required for fusion of myoblasts to skeletal muscle myotubes. Required for normal translocation of FER1L5 to the plasma membrane. Regulates the equilibrium between cell surface-associated and cell surface-dissociated caveolae by constraining caveolae at the cell membrane. The chain is EH domain-containing protein 2 from Mus musculus (Mouse).